The chain runs to 129 residues: Replication initiation control protein YabA (129 aa).

The Zn(2+) site is built by histidine 103, cysteine 105, cysteine 119, and cysteine 122.

This sequence belongs to the YabA family. In terms of assembly, homotetramer. Interacts with both DnaA and DnaN, acting as a bridge between these two proteins. The cofactor is Zn(2+).

The protein resides in the cytoplasm. Its subcellular location is the nucleoid. Its function is as follows. Involved in control of chromosome replication initiation. Inhibits the cooperative binding of DnaA to the oriC region, thus negatively regulating initiation of chromosome replication. Inhibits the ability of DnaA-ATP to form a helix on DNA; does not disassemble preformed DnaA-DNA helices. Decreases the residence time of DnaA on the chromosome at its binding sites (oriC, replication forks and promoter-binding sites). Tethers DnaA to the replication machinery via the DNA polymerase beta sliding clamp subunit (dnaN). Associates with oriC and other DnaA targets on the chromosome in a DnaA-dependent manner. The sequence is that of Replication initiation control protein YabA from Listeria monocytogenes serotype 4b (strain CLIP80459).